The chain runs to 173 residues: Ribosome maturation factor RimM (173 aa).

The region spanning 98–171 (DDQYYYDEII…LITIDALEGL (74 aa)) is the PRC barrel domain.

It belongs to the RimM family. In terms of assembly, binds ribosomal protein uS19.

The protein localises to the cytoplasm. In terms of biological role, an accessory protein needed during the final step in the assembly of 30S ribosomal subunit, possibly for assembly of the head region. Essential for efficient processing of 16S rRNA. May be needed both before and after RbfA during the maturation of 16S rRNA. It has affinity for free ribosomal 30S subunits but not for 70S ribosomes. The polypeptide is Ribosome maturation factor RimM (Leuconostoc mesenteroides subsp. mesenteroides (strain ATCC 8293 / DSM 20343 / BCRC 11652 / CCM 1803 / JCM 6124 / NCDO 523 / NBRC 100496 / NCIMB 8023 / NCTC 12954 / NRRL B-1118 / 37Y)).